Here is a 138-residue protein sequence, read N- to C-terminus: Putative pre-16S rRNA nuclease (138 aa).

Belongs to the YqgF nuclease family.

It is found in the cytoplasm. Could be a nuclease involved in processing of the 5'-end of pre-16S rRNA. In Haemophilus ducreyi (strain 35000HP / ATCC 700724), this protein is Putative pre-16S rRNA nuclease.